The following is a 187-amino-acid chain: Photosystem I assembly protein Ycf4 (187 aa).

Transmembrane regions (helical) follow at residues 25–45 (YLWAIIVTMGGIGFLLSGISS) and 69–89 (MSFYGLLGTIYGIFLWLTVIW).

It belongs to the Ycf4 family.

It localises to the cellular thylakoid membrane. Functionally, seems to be required for the assembly of the photosystem I complex. This is Photosystem I assembly protein Ycf4 from Trichodesmium erythraeum (strain IMS101).